The following is a 917-amino-acid chain: Probable dipeptidyl-aminopeptidase B (917 aa).

Residues 1 to 75 are disordered; that stretch reads MTVGRRLNDE…KYRDDVEEDW (75 aa). At 1–93 the chain is on the cytoplasmic side; that stretch reads MTVGRRLNDE…NAKPSQRRTQ (93 aa). Low complexity predominate over residues 27–39; that stretch reads DSSSTASVSLTLV. Polar residues predominate over residues 40–49; sequence DGTNHTTAKP. Basic and acidic residues predominate over residues 57-69; that stretch reads VSRDRYADEKYRD. The chain crosses the membrane as a helical; Signal-anchor for type II membrane protein span at residues 94-114; that stretch reads IVFWLLVALCVGGWAVAFLFF. Topologically, residues 115–917 are vacuolar; sequence VTSPGNTIST…KRVIRRLLHR (803 aa). A compositionally biased stretch (polar residues) spans 124 to 133; the sequence is TTPDTGSGSP. The disordered stretch occupies residues 124–150; that stretch reads TTPDTGSGSPDSDVIKPGSPPAGKKIP. N-linked (GlcNAc...) asparagine glycans are attached at residues Asn-206, Asn-302, and Asn-354. Ser-759 (charge relay system) is an active-site residue. N-linked (GlcNAc...) asparagine glycosylation is present at Asn-818. Active-site charge relay system residues include Asp-836 and His-869.

Belongs to the peptidase S9B family.

It localises to the vacuole membrane. The enzyme catalyses Release of an N-terminal dipeptide, Xaa-Yaa-|-Zaa-, from a polypeptide, preferentially when Yaa is Pro, provided Zaa is neither Pro nor hydroxyproline.. Functionally, type IV dipeptidyl-peptidase which removes N-terminal dipeptides sequentially from polypeptides having unsubstituted N-termini provided that the penultimate residue is proline. This is Probable dipeptidyl-aminopeptidase B (DAPB) from Arthroderma gypseum (strain ATCC MYA-4604 / CBS 118893) (Microsporum gypseum).